The chain runs to 273 residues: 4-hydroxy-tetrahydrodipicolinate reductase (273 aa).

12–17 contributes to the NAD(+) binding site; the sequence is GAMGRM. Residue lysine 39 participates in NADP(+) binding. Residues 102–104 and 126–129 contribute to the NAD(+) site; these read GTT and ASNF. Residue histidine 159 is the Proton donor/acceptor of the active site. Histidine 160 is a (S)-2,3,4,5-tetrahydrodipicolinate binding site. Lysine 163 acts as the Proton donor in catalysis. 169 to 170 contacts (S)-2,3,4,5-tetrahydrodipicolinate; sequence GT.

This sequence belongs to the DapB family. In terms of assembly, homotetramer.

It localises to the cytoplasm. The enzyme catalyses (S)-2,3,4,5-tetrahydrodipicolinate + NAD(+) + H2O = (2S,4S)-4-hydroxy-2,3,4,5-tetrahydrodipicolinate + NADH + H(+). It catalyses the reaction (S)-2,3,4,5-tetrahydrodipicolinate + NADP(+) + H2O = (2S,4S)-4-hydroxy-2,3,4,5-tetrahydrodipicolinate + NADPH + H(+). It participates in amino-acid biosynthesis; L-lysine biosynthesis via DAP pathway; (S)-tetrahydrodipicolinate from L-aspartate: step 4/4. In terms of biological role, catalyzes the conversion of 4-hydroxy-tetrahydrodipicolinate (HTPA) to tetrahydrodipicolinate. The sequence is that of 4-hydroxy-tetrahydrodipicolinate reductase from Buchnera aphidicola subsp. Schizaphis graminum (strain Sg).